The primary structure comprises 331 residues: Phosphate acyltransferase (331 aa).

It belongs to the PlsX family. Homodimer. Probably interacts with PlsY.

The protein localises to the cytoplasm. The catalysed reaction is a fatty acyl-[ACP] + phosphate = an acyl phosphate + holo-[ACP]. The protein operates within lipid metabolism; phospholipid metabolism. Its function is as follows. Catalyzes the reversible formation of acyl-phosphate (acyl-PO(4)) from acyl-[acyl-carrier-protein] (acyl-ACP). This enzyme utilizes acyl-ACP as fatty acyl donor, but not acyl-CoA. The protein is Phosphate acyltransferase of Malacoplasma penetrans (strain HF-2) (Mycoplasma penetrans).